Reading from the N-terminus, the 138-residue chain is Acidic phospholipase A2 AplTX-I (138 aa).

Positions 1 to 16 (MRTLWIMAVLLLGVEG) are cleaved as a signal peptide. Cystine bridges form between cysteine 42–cysteine 131, cysteine 44–cysteine 60, cysteine 59–cysteine 111, cysteine 65–cysteine 138, cysteine 66–cysteine 104, cysteine 73–cysteine 97, and cysteine 91–cysteine 102. Residues tyrosine 43, glycine 45, and glycine 47 each contribute to the Ca(2+) site. The active site involves histidine 63. Aspartate 64 contributes to the Ca(2+) binding site. Residue aspartate 105 is part of the active site.

As to quaternary structure, monomer. The cofactor is Ca(2+). In terms of tissue distribution, expressed by the venom gland.

The protein resides in the secreted. The enzyme catalyses a 1,2-diacyl-sn-glycero-3-phosphocholine + H2O = a 1-acyl-sn-glycero-3-phosphocholine + a fatty acid + H(+). Its activity is regulated as follows. Inhibited by divalent cations different from calcium ions (cadmium, magnesium, manganese, zinc), since they act as competitive antagonists of this cofactor. Snake venom phospholipase A2 (PLA2) that triggers a high neuromuscular toxicity in chick biventer cervicis preparations, but not in mouse phrenic nerve-diaphragm (PND) preparations, suggesting a selective neurotoxin activity towards birds. Does not induce myotoxic, coagulant, anticoagulant, edema, and antibacterial activities. PLA2 catalyzes the calcium-dependent hydrolysis of the 2-acyl groups in 3-sn-phosphoglycerides. The chain is Acidic phospholipase A2 AplTX-I from Agkistrodon piscivorus leucostoma (Western cottonmouth).